Reading from the N-terminus, the 317-residue chain is Succinate receptor 1 (317 aa).

The Extracellular portion of the chain corresponds to M1–S23. Residue N4 is glycosylated (N-linked (GlcNAc...) asparagine). Residues A24–C47 traverse the membrane as a helical segment. Topologically, residues M48–N55 are cytoplasmic. A helical transmembrane segment spans residues V56 to I76. Residues K77–N101 are Extracellular-facing. The cysteines at positions 91 and 168 are disulfide-linked. A helical transmembrane segment spans residues L102–L119. The Cytoplasmic portion of the chain corresponds to M120–E133. The helical transmembrane segment at F134–I157 threads the bilayer. The Extracellular segment spans residues N158–N180. A helical transmembrane segment spans residues L181–Y204. At K205–R228 the chain is on the cytoplasmic side. A helical membrane pass occupies residues L229–I246. Over M247–P277 the chain is Extracellular. Residues L278 to G294 traverse the membrane as a helical segment. Residues D295 to T317 lie on the Cytoplasmic side of the membrane.

This sequence belongs to the G-protein coupled receptor 1 family. Predominantly expressed in the kidney (proximal and distal tubules and the juxtaglomerular apparatus). Weakly expressed in liver, spleen and small intestine. Highly expressed in immature dendritic cells, expression rapidly downregulates after maturation. Also expressed in macrophages. Specifically expressed in intestinal tuft cells. Expression in whole muscle is attributable to major non-myofibrillar resident cell types, including stromal, endothelial and satellite cell populations.

The protein localises to the cell membrane. In terms of biological role, g protein-coupled receptor for succinate able to mediate signaling through Gq/GNAQ or Gi/GNAI second messengers depending on the cell type and the processes regulated. Succinate-SUCNR1 signaling serves as a link between metabolic stress, inflammation and energy homeostasis. In macrophages, plays a range of immune-regulatory roles. During inflammation, succinate-SUCNR1 signaling may act as an anti-inflammatory mediator or boost inflammation depending on the inflammatory status of cells. Hyperpolarizes M2 macrophages versus M1 phenotype through Gq signaling by regulating the transcription of genes involved in immune function. In activated M1 macrophages, plays a pro-inflammatory role in response to LPS. Expressed in dendritic cells, where it is involved in the sensing of immunological danger and enhances immunity. Mediates succinate triggered intracelleular calcium mobilization, induces migratory responses and acts in synergy with Toll-like receptor ligands for the production of proinflammatory cytokines as well as an enhancement of antigen-specific activation of helper T cells. In the small intestine, mediates the activation of tuft cells by dietary succinate and triggers type 2 immunity. In adipocytes, plays an important role in the control of energy metabolism. In response to succinate, controls leptin expression in an AMPK-JNK-CEBPA-dependent as well as circadian clock-regulated manner. In muscle tissue, is expressed in non-muscle cells and coordinates muscle remodeling in response to the succinate produced during exercise training in a paracrine manner. In retina, acts as a mediator of vessel growth during retinal development. In response to succinate, regulates the production of angiogenic factors, including VEGF, by retinal ganglion neurons. The sequence is that of Succinate receptor 1 (Sucnr1) from Mus musculus (Mouse).